We begin with the raw amino-acid sequence, 1816 residues long: uncharacterized protein (1816 aa).

Disordered stretches follow at residues 338–357 (DSSS…NNNN) and 562–605 (ELEK…IKPK). Residues 339–357 (SSSSSSNNNNNNNNNNNNN) are compositionally biased toward low complexity. Basic and acidic residues predominate over residues 562 to 577 (ELEKERIKKEKEDSKK). A compositionally biased stretch (low complexity) spans 581 to 603 (KQSSSSSSSSTTTTSTTTSSTIK). One can recognise a Helicase ATP-binding domain in the interval 826–999 (LDIVDKRESA…FLKKIDPNRK (174 aa)). Residue 839-846 (ASTSSGKT) coordinates ATP. The short motif at 949–952 (DEVH) is the DEAH box element. The 182-residue stretch at 1198 to 1379 (QLDLVIERFQ…SVVSPSLCLS (182 aa)) folds into the Helicase C-terminal domain. The disordered stretch occupies residues 1388 to 1487 (TNGSANKSNE…TTTKTPTTTS (100 aa)). A compositionally biased stretch (basic and acidic residues) spans 1395-1427 (SNEENKVQVKENEKEREKEKEKEKEKEKEKETI). Over residues 1445–1454 (NWDDDEEETA) the composition is skewed to acidic residues. Low complexity predominate over residues 1456-1487 (STKTTPATTPTTTTTENTPATTTTTKTPTTTS).

Belongs to the helicase family. SKI2 subfamily.

It localises to the nucleus. This is an uncharacterized protein from Dictyostelium discoideum (Social amoeba).